The sequence spans 536 residues: UDP-glucuronosyltransferase 2A2 (536 aa).

Residues 1 to 15 (MVSIRDFTMPKKFVQ) lie on the Cytoplasmic side of the membrane. A helical membrane pass occupies residues 16-36 (MLVFNLTLTEVVLSGNVLIWP). Residues 37–500 (TDGSHWLNIK…TWFQYHSLDV (464 aa)) lie on the Lumenal side of the membrane. N-linked (GlcNAc...) asparagine glycosylation is found at asparagine 58, asparagine 322, and asparagine 356. A helical transmembrane segment spans residues 501 to 521 (IGFLLVCVTTAIFLVIQCCLF). At 522 to 536 (SCQKFGKIGKKKKRE) the chain is on the cytoplasmic side.

Belongs to the UDP-glycosyltransferase family. In terms of tissue distribution, mainly expressed in the nasal mucosa.

The protein resides in the endoplasmic reticulum membrane. The enzyme catalyses glucuronate acceptor + UDP-alpha-D-glucuronate = acceptor beta-D-glucuronoside + UDP + H(+). It catalyses the reaction 17alpha-estradiol + UDP-alpha-D-glucuronate = 17alpha-estradiol 3-O-(beta-D-glucuronate) + UDP + H(+). It carries out the reaction 17beta-estradiol + UDP-alpha-D-glucuronate = 17beta-estradiol 3-O-(beta-D-glucuronate) + UDP + H(+). The catalysed reaction is chenodeoxycholate + UDP-alpha-D-glucuronate = chenodeoxycholoyl-24-O-(beta-D-glucuronate) + UDP. The enzyme catalyses lithocholate + UDP-alpha-D-glucuronate = lithocholoyl-24-O-(beta-D-glucuronate) + UDP. It catalyses the reaction deoxycholate + UDP-alpha-D-glucuronate = deoxycholoyl-24-O-(beta-D-glucuronate) + UDP. It carries out the reaction hyocholate + UDP-alpha-D-glucuronate = hyocholoyl-24-O-(beta-D-glucuronate) + UDP. The catalysed reaction is hyodeoxycholate + UDP-alpha-D-glucuronate = hyodeoxycholate 6-O-(beta-D-glucuronate) + UDP + H(+). Its function is as follows. UDP-glucuronosyltransferase (UGT) that catalyzes phase II biotransformation reactions in which lipophilic substrates are conjugated with glucuronic acid to increase the metabolite's water solubility, thereby facilitating excretion into either the urine or bile. Essential for the elimination and detoxification of drugs, xenobiotics and endogenous compounds. Catalyzes the glucuronidation of endogenous estrogen hormone estradiol. Contributes to bile acid (BA) detoxification by catalyzing the glucuronidation of BA substrates, which are natural detergents for dietary lipids absorption. Shows a potential role in detoxification of toxic waste compounds in the amniotic fluid before birth, and air-born chemical after birth. This chain is UDP-glucuronosyltransferase 2A2, found in Homo sapiens (Human).